Here is a 119-residue protein sequence, read N- to C-terminus: NADH-quinone oxidoreductase subunit A (119 aa).

A run of 3 helical transmembrane segments spans residues 7 to 27 (FPVLLFILVGIGVGLVPMFLG), 63 to 83 (LIAILFILFDLETAFLFPWGV), and 88 to 108 (IGWFGYASMVIFLLEFIVGFV).

It belongs to the complex I subunit 3 family. NDH-1 is composed of 14 different subunits. Subunits NuoA, H, J, K, L, M, N constitute the membrane sector of the complex.

The protein resides in the cell membrane. The catalysed reaction is a quinone + NADH + 5 H(+)(in) = a quinol + NAD(+) + 4 H(+)(out). In terms of biological role, NDH-1 shuttles electrons from NADH, via FMN and iron-sulfur (Fe-S) centers, to quinones in the respiratory chain. The immediate electron acceptor for the enzyme in this species is believed to be ubiquinone. Couples the redox reaction to proton translocation (for every two electrons transferred, four hydrogen ions are translocated across the cytoplasmic membrane), and thus conserves the redox energy in a proton gradient. The sequence is that of NADH-quinone oxidoreductase subunit A from Polynucleobacter asymbioticus (strain DSM 18221 / CIP 109841 / QLW-P1DMWA-1) (Polynucleobacter necessarius subsp. asymbioticus).